The following is a 136-amino-acid chain: Histone H3.2 (136 aa).

Positions 1–43 (MARTKQTARKSTGGKAPRKQLATKAARKSAPATGGVKKPHRFR) are disordered. Position 5 is an N6-methylated lysine (Lys-5). Position 10 is an N6-acetyllysine; alternate (Lys-10). An N6-methylated lysine; alternate modification is found at Lys-10. Ser-11 carries the post-translational modification Phosphoserine. Thr-12 carries the phosphothreonine modification. The residue at position 15 (Lys-15) is an N6-acetyllysine. Residues Lys-19 and Lys-24 each carry the N6-acetyllysine; alternate modification. N6-methylated lysine; alternate is present on residues Lys-19 and Lys-24. Lys-28 is modified (N6-methylated lysine). A Phosphoserine modification is found at Ser-29. Lys-37 carries the post-translational modification N6-methylated lysine.

It belongs to the histone H3 family. In terms of assembly, the nucleosome is a histone octamer containing two molecules each of H2A, H2B, H3 and H4 assembled in one H3-H4 heterotetramer and two H2A-H2B heterodimers. The octamer wraps approximately 147 bp of DNA. Post-translationally, acetylation is generally linked to gene activation. Can be acetylated to form H3K9ac, H3K14ac, H3K18ac and H3K23ac. H3K9ac could compete with H3K9me and prevent gene silencing. H3K9ac is restricted to euchromatin. Methylated to form mainly H3K4me, H3K9me, H3K18me, H3K23me, H3K27me and H3K36me. H3K4me1/2/3, H3K9me3, H3K27me3 and H3K36me1/2/3 are typical marks for euchromatin, whereas heterochromatic chromocenters are enriched in H3K9me1/2 and H3K27me1/2. H2BK143ub1 is probably prerequisite for H3K4me. In terms of processing, can be phosphorylated to form H3S10ph, H3T11ph and H3S28ph.

Its subcellular location is the nucleus. It localises to the chromosome. Its function is as follows. Core component of nucleosome. Nucleosomes wrap and compact DNA into chromatin, limiting DNA accessibility to the cellular machineries which require DNA as a template. Histones thereby play a central role in transcription regulation, DNA repair, DNA replication and chromosomal stability. DNA accessibility is regulated via a complex set of post-translational modifications of histones, also called histone code, and nucleosome remodeling. This Triticum aestivum (Wheat) protein is Histone H3.2.